Here is a 568-residue protein sequence, read N- to C-terminus: Phosphoribosylaminoimidazole carboxylase (568 aa).

One can recognise an ATP-grasp domain in the interval 110–298 (KNHLIKHDVA…QFEAHVRAVT (189 aa)). ATP is bound at residue 138–193 (GEKFGYPYMLKSRTLAYDGRGNFVVKDKSYCEKALEFLKDRPLYAEKWCPFTKELA).

It in the C-terminal section; belongs to the AIR carboxylase family. Class I subfamily.

The enzyme catalyses 5-amino-1-(5-phospho-D-ribosyl)imidazole-4-carboxylate + H(+) = 5-amino-1-(5-phospho-beta-D-ribosyl)imidazole + CO2. It participates in purine metabolism; IMP biosynthesis via de novo pathway; 5-amino-1-(5-phospho-D-ribosyl)imidazole-4-carboxylate from 5-amino-1-(5-phospho-D-ribosyl)imidazole (carboxylase route): step 1/1. This chain is Phosphoribosylaminoimidazole carboxylase (ADE2), found in Candida albicans (strain SC5314 / ATCC MYA-2876) (Yeast).